The following is a 1016-amino-acid chain: Coiled-coil domain-containing protein 57 (1016 aa).

Residues 1 to 503 (MLPLCSEREL…HGLLPGQEAQ (503 aa)) form a centrosomal targeting domain region. 3 coiled-coil regions span residues 14 to 607 (LARK…PVKT), 676 to 700 (SEVDQVHLEVLELQKQVAELRKHLK), and 748 to 775 (VTHLQRKLKDAARKILSLRLEREQLLEM). Disordered stretches follow at residues 500–519 (QEAQVPPQQHEGEIRADSPS) and 549–573 (HLPPAQPEECSNADPDPKAGGDSTP). The tract at residues 604–1016 (PVKTSVATAD…SRIRNYNLKD (413 aa)) is microtubule binding domain. Disordered regions lie at residues 781 to 921 (AEQG…LASS) and 933 to 1016 (GSSP…NLKD). 2 stretches are compositionally biased toward polar residues: residues 846-859 (QPHSAQVGSKTNTP) and 934-945 (SSPSGVPSQDNS).

In terms of assembly, interacts with CEP63; the interaction is required for their location to proximal end of centrioles. Interacts with microtubules.

Its subcellular location is the cytoplasm. It localises to the cytoskeleton. The protein resides in the microtubule organizing center. The protein localises to the centrosome. It is found in the centriolar satellite. Its subcellular location is the centriole. It localises to the spindle. Functionally, pleiotropic regulator of centriole duplication, mitosis, and ciliogenesis. Critical interface between centrosome and microtubule-mediated cellular processes. Centriole duplication protein required for recruitment of CEP63, CEP152, and PLK4 to the centrosome. Independent of its centrosomal targeting, localizes to and interacts with microtubules and regulates microtubule nucleation, stability, and mitotic progression. In Mus musculus (Mouse), this protein is Coiled-coil domain-containing protein 57.